The primary structure comprises 311 residues: Replication initiation protein (311 aa).

The protein belongs to the plasmid replication initiation factor family.

This protein is probably a specific topoisomerase involved in initiating replication. This protein is specifically required and may be rate-limiting for replication of the plasmid in vivo. The protein is Replication initiation protein (repD) of Staphylococcus aureus.